Consider the following 104-residue polypeptide: MNDTEFHQLVDAQMQIIEESIDDSGADIDYEVSGNVMTLEFEDRSQIIINRQEPMHEIWLASKSGGFHFKLVEDKWTCSKTGMELFEMVKQECEKHAGEEIDWA.

This sequence belongs to the frataxin family.

Involved in iron-sulfur (Fe-S) cluster assembly. May act as a regulator of Fe-S biogenesis. The protein is Iron-sulfur cluster assembly protein CyaY of Vibrio parahaemolyticus serotype O3:K6 (strain RIMD 2210633).